The primary structure comprises 544 residues: Chaperonin GroEL (544 aa).

ATP-binding positions include 29–32 (TLGP), 86–90 (DGTTT), G413, 476–478 (NAA), and D492.

Belongs to the chaperonin (HSP60) family. In terms of assembly, forms a cylinder of 14 subunits composed of two heptameric rings stacked back-to-back. Interacts with the co-chaperonin GroES.

The protein localises to the cytoplasm. The protein resides in the secreted. It carries out the reaction ATP + H2O + a folded polypeptide = ADP + phosphate + an unfolded polypeptide.. Functionally, together with its co-chaperonin GroES, plays an essential role in assisting protein folding. The GroEL-GroES system forms a nano-cage that allows encapsulation of the non-native substrate proteins and provides a physical environment optimized to promote and accelerate protein folding. The chain is Chaperonin GroEL from Bacillus subtilis (strain 168).